A 552-amino-acid chain; its full sequence is Urocanate hydratase (552 aa).

Residues 49–50 (GG), glutamine 127, 173–175 (GMG), aspartate 193, 239–240 (NA), 260–264 (QTSAH), 270–271 (YI), and tyrosine 319 contribute to the NAD(+) site. Cysteine 407 is a catalytic residue. Glycine 489 is a binding site for NAD(+).

This sequence belongs to the urocanase family. NAD(+) is required as a cofactor.

It is found in the cytoplasm. The enzyme catalyses 4-imidazolone-5-propanoate = trans-urocanate + H2O. The protein operates within amino-acid degradation; L-histidine degradation into L-glutamate; N-formimidoyl-L-glutamate from L-histidine: step 2/3. Its function is as follows. Catalyzes the conversion of urocanate to 4-imidazolone-5-propionate. This is Urocanate hydratase from Bacillus cereus (strain AH820).